The sequence spans 82 residues: Sec-independent protein translocase protein TatA (82 aa).

The chain crosses the membrane as a helical span at residues 1-21 (MGSFSIWHWLIVLLIVVMVFG). The segment at 46–82 (GASTDDSATTSAPAGQVTNNSAAADKTTIDVEAKHKS) is disordered. Positions 49–67 (TDDSATTSAPAGQVTNNSA) are enriched in polar residues. Positions 72-82 (TTIDVEAKHKS) are enriched in basic and acidic residues.

The protein belongs to the TatA/E family. The Tat system comprises two distinct complexes: a TatABC complex, containing multiple copies of TatA, TatB and TatC subunits, and a separate TatA complex, containing only TatA subunits. Substrates initially bind to the TatABC complex, which probably triggers association of the separate TatA complex to form the active translocon.

It is found in the cell inner membrane. Functionally, part of the twin-arginine translocation (Tat) system that transports large folded proteins containing a characteristic twin-arginine motif in their signal peptide across membranes. TatA could form the protein-conducting channel of the Tat system. This chain is Sec-independent protein translocase protein TatA, found in Acidovorax ebreus (strain TPSY) (Diaphorobacter sp. (strain TPSY)).